The primary structure comprises 276 residues: Ribonuclease 3 (276 aa).

The disordered stretch occupies residues 1–29 (MRGTVSVPKKAEDAKADPPAKKKADTQAS). Basic and acidic residues predominate over residues 9-25 (KKAEDAKADPPAKKKAD). In terms of domain architecture, RNase III spans 31-157 (HTLLEGRLGY…VIGAVYLDQG (127 aa)). Glutamate 70 is a Mg(2+) binding site. The active site involves aspartate 74. Residues aspartate 143 and glutamate 146 each coordinate Mg(2+). The active site involves glutamate 146. Positions 184–252 (DWKTSLQELT…AESAWRSIRA (69 aa)) constitute a DRBM domain. Residues 227–276 (YGTGTGRSKKEAEQQAAESAWRSIRAAADERAKATADAVDADPDEASASA) are disordered. Residues 265–276 (VDADPDEASASA) show a composition bias toward acidic residues.

It belongs to the ribonuclease III family. In terms of assembly, homodimer. Mg(2+) serves as cofactor.

Its subcellular location is the cytoplasm. It carries out the reaction Endonucleolytic cleavage to 5'-phosphomonoester.. Functionally, digests double-stranded RNA. Involved in the processing of primary rRNA transcript to yield the immediate precursors to the large and small rRNAs (23S and 16S). Also processes some mRNAs, and tRNAs when they are encoded in the rRNA operon. May modulate key aspects of gene expression as its absence has extensive effects on the abundance of about 200 different transcripts. Probably processes pre-crRNA and tracrRNA of type II CRISPR loci if present in the organism. The sequence is that of Ribonuclease 3 (rnc) from Streptomyces coelicolor (strain ATCC BAA-471 / A3(2) / M145).